A 495-amino-acid polypeptide reads, in one-letter code: MMITGSSLYAAIDLGSNSFHMLVVREVAGSIQTLTRIKRKVRLAAGLSQDNHLSPEAMERGWQCLRLFAERLQDIPHNQIRVVATATLRLAVNSVDFIAKAQEILGCPVQVISGEEEARLIYQGVAHTTGGDDRRLVVDIGGASTELVTGTGAQATSLFSLSMGCVTWLERYFTDRNLAQENFDEAENAAREVLRPVMDKLRYHGWKVCVGASGTVQALQEIMMAQGMDERITLAKLQQLKQRAIQCGRLEELEIEGLTLERALVFPSGLAILIAIFSELDIHCMTLAGGALREGLVYGMLHLAVEQDIRSRTLRNVQRRFIVDTEQAQRVAQLASSFANQLKTTWALEPLSQDLLISACALHEMGLSIDFKQAPIHAAYLVRNLDLPGFTPAQKKLLATLLLNQTNTVDLSSLHQQNAVPPRVAEHLCRLLRLAILFASRRRDDLLPAIKLEAEGENLTLTLPEDWLDNHPLGAEMIEQEYQWQSYVHWALEVK.

It belongs to the GppA/Ppx family. GppA subfamily.

It carries out the reaction guanosine 3'-diphosphate 5'-triphosphate + H2O = guanosine 3',5'-bis(diphosphate) + phosphate + H(+). It participates in purine metabolism; ppGpp biosynthesis; ppGpp from GTP: step 2/2. In terms of biological role, catalyzes the conversion of pppGpp to ppGpp. Guanosine pentaphosphate (pppGpp) is a cytoplasmic signaling molecule which together with ppGpp controls the 'stringent response', an adaptive process that allows bacteria to respond to amino acid starvation, resulting in the coordinated regulation of numerous cellular activities. This is Guanosine-5'-triphosphate,3'-diphosphate pyrophosphatase from Enterobacter sp. (strain 638).